A 64-amino-acid polypeptide reads, in one-letter code: Large ribosomal subunit protein bL35 (64 aa).

The disordered stretch occupies residues 1-25 (MPKLKTHSGAAKRFKKTATGKVKRS).

The protein belongs to the bacterial ribosomal protein bL35 family.

This chain is Large ribosomal subunit protein bL35, found in Koribacter versatilis (strain Ellin345).